We begin with the raw amino-acid sequence, 110 residues long: ATP-dependent Clp protease adapter protein ClpS (110 aa).

Belongs to the ClpS family. Binds to the N-terminal domain of the chaperone ClpA.

Its function is as follows. Involved in the modulation of the specificity of the ClpAP-mediated ATP-dependent protein degradation. The polypeptide is ATP-dependent Clp protease adapter protein ClpS (Bartonella quintana (strain Toulouse) (Rochalimaea quintana)).